The following is a 246-amino-acid chain: TATA-box-binding protein (246 aa).

The tract at residues 1–27 is disordered; it reads MSSDKTSQQTFKLAPNNSVAQSNSIDQ. A run of 2 repeats spans residues 53–129 and 143–220.

This sequence belongs to the TBP family. Belongs to the TFIID complex together with the TBP-associated factors (TAFs). Binds DNA as monomer.

It localises to the nucleus. Its function is as follows. General transcription factor that functions at the core of the DNA-binding multiprotein factor TFIID. Binding of TFIID to the TATA box is the initial transcriptional step of the pre-initiation complex (PIC), playing a role in the activation of eukaryotic genes transcribed by RNA polymerase II. The protein is TATA-box-binding protein of Tetrahymena thermophila.